The sequence spans 404 residues: Pyrophosphate--fructose 6-phosphate 1-phosphotransferase (404 aa).

Gly12 is a diphosphate binding site. Asp121 contacts Mg(2+). Substrate contacts are provided by residues 149-151 (TID), 194-196 (MGR), Glu266, and 323-326 (YFSR). Catalysis depends on Asp151, which acts as the Proton acceptor.

It belongs to the phosphofructokinase type A (PFKA) family. PPi-dependent PFK group II subfamily. Clade 'P' sub-subfamily. In terms of assembly, homodimer. Mg(2+) serves as cofactor.

It localises to the cytoplasm. It carries out the reaction beta-D-fructose 6-phosphate + diphosphate = beta-D-fructose 1,6-bisphosphate + phosphate + H(+). It functions in the pathway carbohydrate degradation; glycolysis; D-glyceraldehyde 3-phosphate and glycerone phosphate from D-glucose: step 3/4. Non-allosteric. Its function is as follows. Catalyzes the phosphorylation of D-fructose 6-phosphate, the first committing step of glycolysis. Uses inorganic phosphate (PPi) as phosphoryl donor instead of ATP like common ATP-dependent phosphofructokinases (ATP-PFKs), which renders the reaction reversible, and can thus function both in glycolysis and gluconeogenesis. Consistently, PPi-PFK can replace the enzymes of both the forward (ATP-PFK) and reverse (fructose-bisphosphatase (FBPase)) reactions. The sequence is that of Pyrophosphate--fructose 6-phosphate 1-phosphotransferase from Propionibacterium freudenreichii subsp. shermanii (strain ATCC 9614 / DSM 4902 / CIP 103027 / NCIMB 8099 / CIRM-BIA1).